The sequence spans 328 residues: YDG domain-containing protein At5g47150 (328 aa).

Residues 176-320 form the YDG domain; it reads GSVPGINIGD…KSVYKFKLCR (145 aa).

It is found in the nucleus. The protein is YDG domain-containing protein At5g47150 of Arabidopsis thaliana (Mouse-ear cress).